Here is a 595-residue protein sequence, read N- to C-terminus: CDPK-related kinase 3 (595 aa).

The interval 1–131 is disordered; that stretch reads MGQCYGKVNQ…GTEPEQSLDK (131 aa). Residue glycine 2 is the site of N-myristoyl glycine attachment. A compositionally biased stretch (polar residues) spans 20-37; sequence NTTTYVVSGDGNQIQPLT. A compositionally biased stretch (basic and acidic residues) spans 111-124; sequence KPKEGPIPEERGTE. The Protein kinase domain occupies 143–405; sequence YELGKEVGRG…AVQALTHPWL (263 aa). ATP is bound by residues 149–157 and lysine 175; that span reads VGRGHFGHT. The Proton acceptor role is filled by aspartate 271. Phosphoserine is present on serine 311. Serine 353 is modified (phosphoserine; by CPK1 and CPK34). Positions 409 to 439 are autoinhibitory domain; it reads SRVIPLDILIYKLVKAYLHATPLRRAALKAL. The segment at 428-448 is calmodulin binding (CaMBD); it reads ATPLRRAALKALAKALTENEL. EF-hand domains lie at 446 to 482, 483 to 518, 519 to 558, and 559 to 588; these read NELV…ATDA, MRES…IHQL, EAVD…GASA, and YGHL…VTLR. Residues asparagine 461, aspartate 463, serine 465, lysine 502, glutamate 507, asparagine 540, glutamate 547, serine 568, aspartate 570, and lysine 572 each coordinate Ca(2+). Serine 574 is subject to Phosphoserine.

It belongs to the protein kinase superfamily. Ser/Thr protein kinase family. CDPK subfamily. Binds calmodulin (CaM) in a calcium-dependent manner. Interacts with GLN1-1. In terms of processing, autophosphorylated. In terms of tissue distribution, ubiquitously expressed with higher levels in siliques and roots, especially at the root cap. Particularly present in vascular bundles of stems and leaves.

The protein resides in the cytoplasm. It localises to the membrane. It catalyses the reaction L-seryl-[protein] + ATP = O-phospho-L-seryl-[protein] + ADP + H(+). It carries out the reaction L-threonyl-[protein] + ATP = O-phospho-L-threonyl-[protein] + ADP + H(+). With respect to regulation, not activated by calcium. Autophosphorylation may play an important role in the regulation of the kinase activity. Stimulated by magnesium ions (optimum at 10-15 mM) and manganese ions. Its function is as follows. May play a role in signal transduction pathways that involve calcium as a second messenger. Serine/threonine kinase that phosphorylates histone H3 an GLN1-1. In Arabidopsis thaliana (Mouse-ear cress), this protein is CDPK-related kinase 3 (CRK3).